The following is a 255-amino-acid chain: MIKNAVSLVTGGASGLGRATAERLAKQGASVILADLPSSKGNEVAKELGDKVVFVPVDVTSEKDVSAALQTAKDKFGRLDLTVNCAGTATAVKTFNFNKNVAHRLEDFQRVININTVGTFNVIRLSAGLMGANEPNQDGQRGVIVNTASVAAFDGQIGQAAYSASKAAVVGMTLPIARDLSTQGIRICTIAPGLFNTPMLAALPEKVRTFLAKSIPFPQRLGEPSEYAHLVQAIYENPLLNGEVIRIDGALRMMP.

6 residues coordinate NAD(+): Ser-14, Leu-16, Asp-35, Asp-58, Val-59, and Cys-85. Substrate is bound at residue Ser-149. Positions 162, 166, 195, and 197 each coordinate NAD(+). Tyr-162 serves as the catalytic Proton acceptor.

Belongs to the short-chain dehydrogenases/reductases (SDR) family. As to quaternary structure, component of mitochondrial ribonuclease P, a complex composed of rswl/MRPP1, scu/MRPP2 and mldr/MRPP3. In terms of tissue distribution, found in many tissues including CNS, imaginal disks and salivary glands. Highest expression in both embryonic gonadal primordia and mature ovaries and testes.

It is found in the mitochondrion. The catalysed reaction is a (3S)-3-hydroxyacyl-CoA + NAD(+) = a 3-oxoacyl-CoA + NADH + H(+). It carries out the reaction (3S)-3-hydroxybutanoyl-CoA + NAD(+) = acetoacetyl-CoA + NADH + H(+). It catalyses the reaction testosterone + NAD(+) = androst-4-ene-3,17-dione + NADH + H(+). The enzyme catalyses 5alpha-androstane-3alpha,17beta-diol + NAD(+) = 17beta-hydroxy-5alpha-androstan-3-one + NADH + H(+). The catalysed reaction is 17beta-estradiol + NAD(+) = estrone + NADH + H(+). It carries out the reaction ursodeoxycholate + NAD(+) = 7-oxolithocholate + NADH + H(+). It catalyses the reaction 3beta,7beta-dihydroxy-5beta-cholan-24-oate + NAD(+) = 3beta-hydroxy-7-oxo-5beta-cholan-24-oate + NADH + H(+). The enzyme catalyses 11-dehydrocorticosterone + NAD(+) = pregn-4-ene-3,11,20,21-tetraone + NADH + H(+). The catalysed reaction is cortisone + NAD(+) = 17alpha-hydroxypregn-4-en-3,11,20-trione-21-al + NADH + H(+). It carries out the reaction cortisol + NAD(+) = 11beta,17alpha-dihydroxypregn-4-ene-3,20,21-trione + NADH + H(+). It catalyses the reaction 5alpha-pregnan-20beta-ol-3-one + NAD(+) = 5alpha-pregnane-3,20-dione + NADH + H(+). The enzyme catalyses 17beta-hydroxy-5alpha-androstan-3-one + NAD(+) = 5alpha-androstan-3,17-dione + NADH + H(+). Mitochondrial dehydrogenase involved in pathways of fatty acid, and steroid metabolism. Versatile enzyme presenting two types of activity; L-3-hydroxyacyl-CoA dehydrogenase ((3S)-3-hydroxyacyl-CoA dehydrogenase) activity and hydroxysteroid dehydrogenase (HSD) activity with a wide substrate spectrum. As a (3S)-3-hydroxyacyl-CoA dehydrogenase, it functions in the third step of the fatty acid beta-oxidation pathway, a major metabolic process in which fatty acids are oxidized to provide a significant source of energy, while also generating acyl-CoA metabolites used by many metabolic routes. As a HSD, it functions in the degradation pathways of glucocorticoids and sex steroids and epimerization of bile acids; catalyzes the beta-oxidation at position 17 of androgens and estrogens, has 3-alpha-hydroxysteroid dehydrogenase activity with androsterone, and carries out oxidative conversions of 7-beta-hydroxylated bile acids like ursodeoxycholate or isoursodeoxycholate (also known as 3-beta,7-beta-dihydroxy-5-beta-cholan-24-oate or 7-beta-hydroxyisolithocholate, respectively). Also exhibits 20-beta-OH and 21-OH dehydrogenase activities with C21 steroids. Essential for structural and functional integrity of mitochondria. Required for cell survival during embryonic development. May play a role in germline formation. In terms of biological role, in addition to mitochondrial dehydrogenase activity, moonlights as a component of mitochondrial ribonuclease P, a complex that cleaves tRNA molecules in their 5'-ends. Essential for the structural and functional integrity of mitochondria. Function is essential for pupal development. The protein is 3-hydroxyacyl-CoA dehydrogenase type-2 of Drosophila melanogaster (Fruit fly).